The primary structure comprises 159 residues: Phosphopantetheine adenylyltransferase (159 aa).

His-16 serves as a coordination point for ATP. Lys-40, Met-72, and Arg-86 together coordinate substrate. ATP-binding positions include 87 to 89 (GLR), Glu-97, and 122 to 128 (YQYLSAS).

Belongs to the bacterial CoaD family. In terms of assembly, homohexamer. Mg(2+) serves as cofactor.

It is found in the cytoplasm. The catalysed reaction is (R)-4'-phosphopantetheine + ATP + H(+) = 3'-dephospho-CoA + diphosphate. Its pathway is cofactor biosynthesis; coenzyme A biosynthesis; CoA from (R)-pantothenate: step 4/5. Its function is as follows. Reversibly transfers an adenylyl group from ATP to 4'-phosphopantetheine, yielding dephospho-CoA (dPCoA) and pyrophosphate. This is Phosphopantetheine adenylyltransferase from Dehalococcoides mccartyi (strain CBDB1).